The chain runs to 263 residues: Tryptophan synthase alpha chain (263 aa).

Residues glutamate 49 and aspartate 60 each act as proton acceptor in the active site.

The protein belongs to the TrpA family. In terms of assembly, tetramer of two alpha and two beta chains.

It carries out the reaction (1S,2R)-1-C-(indol-3-yl)glycerol 3-phosphate + L-serine = D-glyceraldehyde 3-phosphate + L-tryptophan + H2O. The protein operates within amino-acid biosynthesis; L-tryptophan biosynthesis; L-tryptophan from chorismate: step 5/5. In terms of biological role, the alpha subunit is responsible for the aldol cleavage of indoleglycerol phosphate to indole and glyceraldehyde 3-phosphate. The polypeptide is Tryptophan synthase alpha chain (Cereibacter sphaeroides (strain ATCC 17029 / ATH 2.4.9) (Rhodobacter sphaeroides)).